Consider the following 95-residue polypeptide: Co-chaperonin GroES (95 aa).

It belongs to the GroES chaperonin family. As to quaternary structure, heptamer of 7 subunits arranged in a ring. Interacts with the chaperonin GroEL.

Its subcellular location is the cytoplasm. Functionally, together with the chaperonin GroEL, plays an essential role in assisting protein folding. The GroEL-GroES system forms a nano-cage that allows encapsulation of the non-native substrate proteins and provides a physical environment optimized to promote and accelerate protein folding. GroES binds to the apical surface of the GroEL ring, thereby capping the opening of the GroEL channel. The sequence is that of Co-chaperonin GroES from Chlorobium phaeobacteroides (strain DSM 266 / SMG 266 / 2430).